Reading from the N-terminus, the 658-residue chain is Transmembrane 9 superfamily member 11 (658 aa).

The first 23 residues, 1–23 (MRSMDRFGIWVLAILLVIQSSFG), serve as a signal peptide directing secretion. Residues 24–291 (FYLPGSYPHK…LKMEGSKVHW (268 aa)) lie on the Lumenal side of the membrane. The helical transmembrane segment at 292-312 (FSILNSLMVITFLAGIVLVIF) threads the bilayer. Residues 313–364 (LRTVRRDLTRYEELDKEAQAQMNEELSGWKLVVGDVFRAPSNASLLCVMVGD) are Cytoplasmic-facing. Residues 365–385 (GVQILGMAVVTILFAALGFMS) form a helical membrane-spanning segment. Over 386-391 (PASRGT) the chain is Lumenal. A helical membrane pass occupies residues 392–412 (LITGMLFFYMILGIAAGYVSV). Residues 413 to 432 (RLWRTIGCGEHRGWMSVAWK) lie on the Cytoplasmic side of the membrane. Residues 433–453 (AACFFPGIAFLILTTLNFLLW) form a helical membrane-spanning segment. Over 454-462 (GSHSTGAIP) the chain is Lumenal. The chain crosses the membrane as a helical span at residues 463 to 483 (FSLFVILLLLWFCISVPLTLI). Over 484 to 515 (GGYFGAKAPHIEFPVRTNQIPREIPAQKYPSW) the chain is Cytoplasmic. A helical transmembrane segment spans residues 516 to 536 (LLVLGAGTLPFGTLFIELFFI). The Lumenal portion of the chain corresponds to 537-547 (MSSIWMGRVYY). The chain crosses the membrane as a helical span at residues 548 to 568 (VFGFLFVVLILLVVVCAEVSL). Topologically, residues 569–586 (VLTYMHLCVEDYKWWWKS) are cytoplasmic. A helical transmembrane segment spans residues 587–607 (FFASGSVAIYIFIYSINYLVF). At 608–619 (DLKSLSGPVSAT) the chain is on the lumenal side. Residues 620–640 (LYLGYSLFMVLAIMLATGTVG) form a helical membrane-spanning segment. Topologically, residues 641-658 (FLSSFWFVHYLFSSVKLD) are cytoplasmic. Positions 647–652 (FVHYLF) match the Endoplasmic reticulum export signal motif. Positions 656 to 658 (KLD) match the Golgi retention signal motif.

This sequence belongs to the nonaspanin (TM9SF) (TC 9.A.2) family.

It localises to the endosome membrane. It is found in the golgi apparatus membrane. This Arabidopsis thaliana (Mouse-ear cress) protein is Transmembrane 9 superfamily member 11.